Consider the following 179-residue polypeptide: Cytoglobin-2 (179 aa).

A Globin domain is found at 18–167; sequence PLSDAEMEII…VYWHVTGAYT (150 aa). The heme b site is built by histidine 81 and histidine 113.

Belongs to the globin family. As to quaternary structure, monomeric.

It is found in the cytoplasm. It localises to the nucleus. It catalyses the reaction Fe(II)-heme b-[protein] + nitric oxide + O2 = Fe(III)-heme b-[protein] + nitrate. The catalysed reaction is Fe(III)-heme b-[protein] + nitric oxide + H2O = Fe(II)-heme b-[protein] + nitrite + 2 H(+). The enzyme catalyses 2 superoxide + 2 H(+) = H2O2 + O2. It carries out the reaction H2O2 + AH2 = A + 2 H2O. Functionally, probable multifunctional globin with a hexacoordinated heme iron required for the catalysis of various reactions depending on redox condition of the cell as well as oxygen availability. Has a nitric oxide dioxygenase (NOD) activity and is most probably involved in cell-mediated and oxygen-dependent nitric oxide consumption. Under normoxic conditions functions as a nitric oxide dioxygenase (NOD) but under hypoxic conditions the globin may switch its function to that of a nitrite (NO2) reductase (NiR), generating nitric oxide. Could also have peroxidase and superoxide dismutase activities, detoxifying reactive oxygen species and protecting cells against oxidative stress. Also binds dioxygen with low affinity and could function as an oxygen sensor but has probably no function as a respiratory oxygen carrier. The sequence is that of Cytoglobin-2 from Oryzias latipes (Japanese rice fish).